We begin with the raw amino-acid sequence, 527 residues long: Amine oxidase [flavin-containing] A (527 aa).

N-acetylmethionine is present on methionine 1. Topologically, residues 1 to 497 (MENQEKASIA…HTFWERNLPS (497 aa)) are cytoplasmic. Phosphoserine is present on serine 383. The residue at position 406 (cysteine 406) is an S-8alpha-FAD cysteine. The chain crosses the membrane as a helical; Anchor for type IV membrane protein span at residues 498-518 (VSGLLKIIGFSTSVTALGFVL). At 519–527 (YKYKLLPRS) the chain is on the mitochondrial intermembrane side. Residues 520 to 522 (KYK) are interaction with membrane phospholipid headgroups.

The protein belongs to the flavin monoamine oxidase family. In terms of assembly, monomer, homo- or heterodimer (containing two subunits of similar size). Each subunit contains a covalently bound flavin. Enzymatically active as monomer. The cofactor is FAD.

Its subcellular location is the mitochondrion outer membrane. The catalysed reaction is a secondary aliphatic amine + O2 + H2O = a primary amine + an aldehyde + H2O2. It carries out the reaction a primary methyl amine + O2 + H2O = an aldehyde + H2O2 + NH4(+). The enzyme catalyses (R)-adrenaline + O2 + H2O = (R)-3,4-dihydroxymandelaldehyde + methylamine + H2O2. It catalyses the reaction dopamine + O2 + H2O = 3,4-dihydroxyphenylacetaldehyde + H2O2 + NH4(+). The catalysed reaction is tyramine + O2 + H2O = (4-hydroxyphenyl)acetaldehyde + H2O2 + NH4(+). It carries out the reaction (R)-noradrenaline + O2 + H2O = (R)-3,4-dihydroxymandelaldehyde + H2O2 + NH4(+). The enzyme catalyses serotonin + O2 + H2O = (5-hydroxyindol-3-yl)acetaldehyde + H2O2 + NH4(+). It catalyses the reaction kynuramine + O2 + H2O = 3-(2-aminophenyl)-3-oxopropanal + H2O2 + NH4(+). The catalysed reaction is tryptamine + O2 + H2O = indole-3-acetaldehyde + H2O2 + NH4(+). It carries out the reaction 2-phenylethylamine + O2 + H2O = 2-phenylacetaldehyde + H2O2 + NH4(+). Its function is as follows. Catalyzes the oxidative deamination of primary and some secondary amine such as neurotransmitters, with concomitant reduction of oxygen to hydrogen peroxide and has important functions in the metabolism of neuroactive and vasoactive amines in the central nervous system and peripheral tissues. Preferentially oxidizes serotonin. Also catalyzes the oxidative deamination of kynuramine to 3-(2-aminophenyl)-3-oxopropanal that can spontaneously condense to 4-hydroxyquinoline. The sequence is that of Amine oxidase [flavin-containing] A from Pongo abelii (Sumatran orangutan).